A 314-amino-acid chain; its full sequence is ATP synthase gamma chain (314 aa).

It belongs to the ATPase gamma chain family. As to quaternary structure, F-type ATPases have 2 components, CF(1) - the catalytic core - and CF(0) - the membrane proton channel. CF(1) has five subunits: alpha(3), beta(3), gamma(1), delta(1), epsilon(1). CF(0) has three main subunits: a, b and c.

It localises to the cell membrane. Produces ATP from ADP in the presence of a proton gradient across the membrane. The gamma chain is believed to be important in regulating ATPase activity and the flow of protons through the CF(0) complex. This Cutibacterium acnes (strain DSM 16379 / KPA171202) (Propionibacterium acnes) protein is ATP synthase gamma chain.